A 647-amino-acid chain; its full sequence is Acetyl-coenzyme A synthetase (647 aa).

Residues 190–193 and threonine 310 each bind CoA; that span reads RGGR. ATP is bound by residues 386 to 388, 410 to 415, aspartate 499, and arginine 514; these read GEP and DTWWQT. Serine 522 is a binding site for CoA. Arginine 525 lines the ATP pocket. Mg(2+) is bound by residues valine 536, histidine 538, and valine 541. Position 583 (arginine 583) interacts with CoA. N6-acetyllysine is present on lysine 608.

This sequence belongs to the ATP-dependent AMP-binding enzyme family. Mg(2+) serves as cofactor. In terms of processing, acetylated. Deacetylation by the SIR2-homolog deacetylase activates the enzyme.

The enzyme catalyses acetate + ATP + CoA = acetyl-CoA + AMP + diphosphate. Functionally, catalyzes the conversion of acetate into acetyl-CoA (AcCoA), an essential intermediate at the junction of anabolic and catabolic pathways. AcsA undergoes a two-step reaction. In the first half reaction, AcsA combines acetate with ATP to form acetyl-adenylate (AcAMP) intermediate. In the second half reaction, it can then transfer the acetyl group from AcAMP to the sulfhydryl group of CoA, forming the product AcCoA. The protein is Acetyl-coenzyme A synthetase of Xylella fastidiosa (strain Temecula1 / ATCC 700964).